The sequence spans 394 residues: Chorismate synthase (394 aa).

Position 62 (Arg62) interacts with NADP(+). FMN contacts are provided by residues 144–146, Gly307, 322–326, and Arg349; these read RAS and KPTPT.

Belongs to the chorismate synthase family. Homotetramer. FMNH2 is required as a cofactor.

The enzyme catalyses 5-O-(1-carboxyvinyl)-3-phosphoshikimate = chorismate + phosphate. Its pathway is metabolic intermediate biosynthesis; chorismate biosynthesis; chorismate from D-erythrose 4-phosphate and phosphoenolpyruvate: step 7/7. Catalyzes the anti-1,4-elimination of the C-3 phosphate and the C-6 proR hydrogen from 5-enolpyruvylshikimate-3-phosphate (EPSP) to yield chorismate, which is the branch point compound that serves as the starting substrate for the three terminal pathways of aromatic amino acid biosynthesis. This reaction introduces a second double bond into the aromatic ring system. This chain is Chorismate synthase, found in Acetivibrio thermocellus (strain ATCC 27405 / DSM 1237 / JCM 9322 / NBRC 103400 / NCIMB 10682 / NRRL B-4536 / VPI 7372) (Clostridium thermocellum).